The following is a 105-amino-acid chain: Ig lambda chain C region (105 aa).

The Ig-like domain occupies 6–100 (PSVILFPPSS…EGHTVEKSLA (95 aa)). The cysteines at positions 27 and 86 are disulfide-linked.

In Oryctolagus cuniculus (Rabbit), this protein is Ig lambda chain C region.